The primary structure comprises 240 residues: DISARM protein DrmC (240 aa).

The PLD phosphodiesterase domain occupies 174 to 201; sequence GYSSLHAKVIMVDEEKAFVSSANLSYNG. Residues His179, Lys181, and Asp186 contribute to the active site.

The protein belongs to the phospholipase D family.

It is found in the cytoplasm. Its function is as follows. Component of antiviral defense system DISARM (defense island system associated with restriction-modification), composed of DrmE, DrmA, DrmB, DrmC and DrmMII. DISARM is probably a multi-gene restriction module, this subunit is probably a phospholipase or nuclease. Expression of DISARM in B.subtilis (strain BEST7003) confers resistance to phages Nf, phi29, phi105, phi3T, SPO1, SPR and SPP1. Protection is over 10(7)-fold against phi3T, 10(4)-10(5)-fold against Nf, phi29, phi105 and SPR, 100-fold against SPO1 and 10-fold against SPP1. DISARM does not interfere with phage adsorption, but instead interferes with (phi3T) DNA replication early in its cycle, preventing replication, circularization and lysogeny and probably causes phage DNA degradation (DNA is degraded in SPP1-infected cells). The sequence is that of DISARM protein DrmC from Bacillus paralicheniformis (strain ATCC 9945a / NCIMB 11709 / CD-2).